A 360-amino-acid polypeptide reads, in one-letter code: MTKKTQVGLIFGGNSSEYEVSIVSCRNIYKAIDKEKFDVHPIWITNEGYFANEEESFKVLEDPSYQVKNPHKVHNISNLIELENLPEIDVFFPIVHGNLGEDGVLQGLFRLMNKPFVGDDVLAAAVTMDKEFTKILAQRVGVPVADWITIKRFEYDDKNNDKLDYEKVAEKLGRDMFVKPSNQGSSVGVSHVTNADEYAAALKEAFKYDDKVLVEETVPGTEVETAVLGNDKPIVAGVGQITNAKGSFYSYKNKYDDNSTSKLQIPADLPQEIIDTVRRNARKVYEVTECSGMARIDSMLTPGGKVVLTEVNALPGFTNISMYPKLFEEAGVPYTELITRLIEVGMERFDHKKTLLHKHD.

The 210-residue stretch at 134–343 folds into the ATP-grasp domain; the sequence is KILAQRVGVP…YTELITRLIE (210 aa). 169 to 224 is a binding site for ATP; the sequence is AEKLGRDMFVKPSNQGSSVGVSHVTNADEYAAALKEAFKYDDKVLVEETVPGTEVE. Residues Asp297, Glu310, and Asn312 each coordinate Mg(2+).

The protein belongs to the D-alanine--D-alanine ligase family. The cofactor is Mg(2+). Mn(2+) serves as cofactor.

The protein resides in the cytoplasm. The catalysed reaction is 2 D-alanine + ATP = D-alanyl-D-alanine + ADP + phosphate + H(+). The protein operates within cell wall biogenesis; peptidoglycan biosynthesis. In terms of biological role, cell wall formation. This is D-alanine--D-alanine ligase from Lactobacillus helveticus (strain DPC 4571).